Consider the following 112-residue polypeptide: Integration host factor subunit alpha (112 aa).

Belongs to the bacterial histone-like protein family. In terms of assembly, heterodimer of an alpha and a beta chain.

Its function is as follows. This protein is one of the two subunits of integration host factor, a specific DNA-binding protein that functions in genetic recombination as well as in transcriptional and translational control. The polypeptide is Integration host factor subunit alpha (Sinorhizobium fredii (strain NBRC 101917 / NGR234)).